The following is a 419-amino-acid chain: ATP phosphoribosyltransferase regulatory subunit (419 aa).

The protein belongs to the class-II aminoacyl-tRNA synthetase family. HisZ subfamily. As to quaternary structure, heteromultimer composed of HisG and HisZ subunits.

Its subcellular location is the cytoplasm. The protein operates within amino-acid biosynthesis; L-histidine biosynthesis; L-histidine from 5-phospho-alpha-D-ribose 1-diphosphate: step 1/9. Required for the first step of histidine biosynthesis. May allow the feedback regulation of ATP phosphoribosyltransferase activity by histidine. This Ruminiclostridium cellulolyticum (strain ATCC 35319 / DSM 5812 / JCM 6584 / H10) (Clostridium cellulolyticum) protein is ATP phosphoribosyltransferase regulatory subunit.